Consider the following 1425-residue polypeptide: Protein NAP1 (1425 aa).

Polar residues-rich tracts occupy residues 1-20 (MANSRQYYPSQDESMSPTSV), 1299-1312 (TPLSTASPYHSPSV), and 1320-1329 (SMKNSTTPQR). Disordered stretches follow at residues 1–24 (MANSRQYYPSQDESMSPTSVRSRE) and 1299–1425 (TPLS…KQHN). The segment covering 1362–1405 (SETGNSRNNENNNNNKQRGSSRRSGPLDYSSSHKGGSGSNSTGP) has biased composition (low complexity).

Belongs to the HEM-1/HEM-2 family. Binds PIR. In terms of tissue distribution, expressed in roots, root hairs, hypocotyls, cotyledons, stems, leaves, trichomes, and flowers.

Its function is as follows. Involved in regulation of actin and microtubule organization. Part of a WAVE complex that activates the Arp2/3 complex. This chain is Protein NAP1 (NAP1), found in Arabidopsis thaliana (Mouse-ear cress).